Consider the following 202-residue polypeptide: MSSVYTRPLARLIEQLQRLPGIGPKTAQRLALHLIKRPEADIQALAQALLEAKQQVGLCSVCFHLSAEPVCEICASPQRDNHTICVVADSRDVIAIEKTREYHGKYHVLGGLISPLEGITPEHLHIQPLIQRASQPQVEEVILAINPSIEGETTTLYVGQLLRPFVKVTRIAFGLPVGGDLDYADEMTLARALAGRREIEWQ.

The segment at 59-74 (CSVCFHLSAEPVCEIC) adopts a C4-type zinc-finger fold. In terms of domain architecture, Toprim spans 82–176 (HTICVVADSR…KVTRIAFGLP (95 aa)).

This sequence belongs to the RecR family.

In terms of biological role, may play a role in DNA repair. It seems to be involved in an RecBC-independent recombinational process of DNA repair. It may act with RecF and RecO. The polypeptide is Recombination protein RecR (Thermosynechococcus vestitus (strain NIES-2133 / IAM M-273 / BP-1)).